Consider the following 154-residue polypeptide: S-ribosylhomocysteine lyase (154 aa).

Fe cation is bound by residues His-58, His-62, and Cys-125.

It belongs to the LuxS family. Homodimer. Fe cation serves as cofactor.

The enzyme catalyses S-(5-deoxy-D-ribos-5-yl)-L-homocysteine = (S)-4,5-dihydroxypentane-2,3-dione + L-homocysteine. Its function is as follows. Involved in the synthesis of autoinducer 2 (AI-2) which is secreted by bacteria and is used to communicate both the cell density and the metabolic potential of the environment. The regulation of gene expression in response to changes in cell density is called quorum sensing. Catalyzes the transformation of S-ribosylhomocysteine (RHC) to homocysteine (HC) and 4,5-dihydroxy-2,3-pentadione (DPD). The sequence is that of S-ribosylhomocysteine lyase from Dichelobacter nodosus (strain VCS1703A).